We begin with the raw amino-acid sequence, 349 residues long: N-lysine methyltransferase KMT5A (349 aa).

The disordered stretch occupies residues 18 to 46 (AAVAATAPGPEMVEQRGPGRPRSDGENVF). Serine 57 carries the phosphoserine modification. Positions 65–207 (RSPLQEENSV…SEERKKNELI (143 aa)) are disordered. Basic and acidic residues predominate over residues 107 to 119 (VKSDEQKSKDTRR). At threonine 138 the chain carries Phosphothreonine. Residues 154-170 (ALKKSLKGKQAPRKKSQ) show a composition bias toward basic residues. The span at 192-207 (SKAELQSEERKKNELI) shows a compositional bias: basic and acidic residues. In terms of domain architecture, SET spans 213-334 (EGMKIDLIDG…AGEELLYDYG (122 aa)). S-adenosyl-L-methionine contacts are provided by residues 223–225 (KGR), tyrosine 268, and 295–296 (NH).

Belongs to the class V-like SAM-binding methyltransferase superfamily. Histone-lysine methyltransferase family. PR/SET subfamily. Interacts with L3MBTL1. Interacts with SIRT2 (phosphorylated form); the interaction is direct, stimulates KMT5A-mediated methyltransferase activity at histone H4 'Lys-20' (H4K20me1) and is increased in a H(2)O(2)-induced oxidative stress-dependent manner. Post-translationally, ubiquitinated and degraded by the DCX(DTL) complex.

It is found in the nucleus. It localises to the chromosome. It catalyses the reaction L-lysyl(20)-[histone H4] + S-adenosyl-L-methionine = N(6)-methyl-L-lysyl(20)-[histone H4] + S-adenosyl-L-homocysteine + H(+). The catalysed reaction is L-lysyl-[protein] + S-adenosyl-L-methionine = N(6)-methyl-L-lysyl-[protein] + S-adenosyl-L-homocysteine + H(+). Functionally, protein-lysine N-methyltransferase that monomethylates both histones and non-histone proteins. Specifically monomethylates 'Lys-20' of histone H4 (H4K20me1). H4K20me1 is enriched during mitosis and represents a specific tag for epigenetic transcriptional repression. Mainly functions in euchromatin regions, thereby playing a central role in the silencing of euchromatic genes. Required for cell proliferation, probably by contributing to the maintenance of proper higher-order structure of DNA during mitosis. Involved in chromosome condensation and proper cytokinesis. Nucleosomes are preferred as substrate compared to free histones. Mediates monomethylation of p53/TP53 at 'Lys-382', leading to repress p53/TP53-target genes. Plays a negative role in TGF-beta response regulation and a positive role in cell migration. This is N-lysine methyltransferase KMT5A from Mus musculus (Mouse).